The chain runs to 559 residues: Urocanate hydratase (559 aa).

Residues 53–54 (GG), Gln131, 177–179 (GMG), Glu197, Arg202, 243–244 (NA), 264–268 (QTSAH), 274–275 (YL), and Tyr323 contribute to the NAD(+) site. Cys411 is an active-site residue. Residue Gly493 coordinates NAD(+).

It belongs to the urocanase family. The cofactor is NAD(+).

It is found in the cytoplasm. The enzyme catalyses 4-imidazolone-5-propanoate = trans-urocanate + H2O. It functions in the pathway amino-acid degradation; L-histidine degradation into L-glutamate; N-formimidoyl-L-glutamate from L-histidine: step 2/3. Functionally, catalyzes the conversion of urocanate to 4-imidazolone-5-propionate. The polypeptide is Urocanate hydratase (Pseudomonas aeruginosa (strain ATCC 15692 / DSM 22644 / CIP 104116 / JCM 14847 / LMG 12228 / 1C / PRS 101 / PAO1)).